A 626-amino-acid chain; its full sequence is Myelin-associated glycoprotein (626 aa).

The N-terminal stretch at Met-1–Gly-19 is a signal peptide. The interval Gly-20–Ala-325 is interaction with RTN4R and RTN4RL2. Topologically, residues Gly-20–Pro-516 are extracellular. An Ig-like V-type domain is found at Trp-22 to Asp-120. 3 disulfide bridges follow: Cys-37/Cys-165, Cys-42/Cys-100, and Cys-159/Cys-217. Position 65-67 (Tyr-65–Lys-67) interacts with a ganglioside GT1b (d18:1(4E)). Asn-99 is a glycosylation site (N-linked (GlcNAc...) asparagine). Asn-106 carries N-linked (GlcNAc...) asparagine; partial glycosylation. A ganglioside GT1b (d18:1(4E)) contacts are provided by residues Arg-118 and Tyr-124–Thr-128. 4 consecutive Ig-like C2-type domains span residues Asn-139–Lys-237, Val-241–Ala-325, Trp-327–Ala-412, and Pro-413–Arg-508. Asn-223 and Asn-246 each carry an N-linked (GlcNAc...) asparagine glycan. A disulfide bridge connects residues Cys-261 and Cys-305. An N-linked (GlcNAc...) asparagine glycan is attached at Asn-315. A disulfide bridge connects residues Cys-347 and Cys-392. The N-linked (GlcNAc...) asparagine glycan is linked to Asn-406. 2 disulfides stabilise this stretch: Cys-421–Cys-430 and Cys-432–Cys-488. Asn-450 and Asn-454 each carry an N-linked (GlcNAc...) asparagine glycan. A helical transmembrane segment spans residues Val-517 to Thr-536. Cys-531 carries the S-palmitoyl cysteine lipid modification. Over Arg-537–Lys-626 the chain is Cytoplasmic. Ser-545, Ser-547, and Ser-549 each carry phosphoserine. Residues Leu-577–Lys-626 are required for normal axon myelination in the central nervous system. The tract at residues Arg-582–Lys-608 is disordered.

This sequence belongs to the immunoglobulin superfamily. SIGLEC (sialic acid binding Ig-like lectin) family. Monomer and homodimer. Interacts (via the first three N-terminal Ig-like domains) with RTN4R and RTN4RL2. Interacts with RTN4R. Interacts with isoform 2 of BSG. N-glycosylated. In terms of processing, phosphorylated on tyrosine residues. Post-translationally, ubiquitinated, leading to proteasomal degradation. Both isoform 1 and isoform 2 are detected in myelinated structures in the central and peripheral nervous system, in periaxonal myelin and at Schmidt-Lanterman incisures. Detected in optic nerve, in oligodendroglia and in periaxonal myelin sheaths. Detected in compact myelin (at protein level). Both isoform 1 and isoform 2 are detected in the central and peripheral nervous system.

The protein resides in the cell membrane. The protein localises to the membrane raft. Its function is as follows. Adhesion molecule that mediates interactions between myelinating cells and neurons by binding to neuronal sialic acid-containing gangliosides and to the glycoproteins RTN4R and RTN4RL2. Not required for initial myelination, but seems to play a role in the maintenance of normal axon myelination. Protects motoneurons against apoptosis, also after injury; protection against apoptosis is probably mediated via interaction with neuronal RTN4R and RTN4RL2. Required to prevent degeneration of myelinated axons in adults; this probably depends on binding to gangliosides on the axon cell membrane. Negative regulator of neurite outgrowth; in dorsal root ganglion neurons the inhibition is mediated primarily via binding to neuronal RTN4R or RTN4RL2 and to a lesser degree via binding to neuronal gangliosides. In cerebellar granule cells the inhibition is mediated primarily via binding to neuronal gangliosides. In sensory neurons, inhibition of neurite extension depends only partially on RTN4R, RTN4RL2 and gangliosides. Inhibits axon longitudinal growth. Inhibits axon outgrowth by binding to RTN4R. Preferentially binds to alpha-2,3-linked sialic acid. Binds ganglioside Gt1b. The sequence is that of Myelin-associated glycoprotein (MAG) from Homo sapiens (Human).